Reading from the N-terminus, the 464-residue chain is ATP synthase subunit beta (464 aa).

153–160 contacts ATP; it reads GGAGVGKT.

Belongs to the ATPase alpha/beta chains family. F-type ATPases have 2 components, CF(1) - the catalytic core - and CF(0) - the membrane proton channel. CF(1) has five subunits: alpha(3), beta(3), gamma(1), delta(1), epsilon(1). CF(0) has three main subunits: a(1), b(2) and c(9-12). The alpha and beta chains form an alternating ring which encloses part of the gamma chain. CF(1) is attached to CF(0) by a central stalk formed by the gamma and epsilon chains, while a peripheral stalk is formed by the delta and b chains.

It is found in the cell inner membrane. The enzyme catalyses ATP + H2O + 4 H(+)(in) = ADP + phosphate + 5 H(+)(out). In terms of biological role, produces ATP from ADP in the presence of a proton gradient across the membrane. The catalytic sites are hosted primarily by the beta subunits. This chain is ATP synthase subunit beta, found in Burkholderia vietnamiensis (strain G4 / LMG 22486) (Burkholderia cepacia (strain R1808)).